Reading from the N-terminus, the 118-residue chain is Beta-2-microglobulin (118 aa).

A signal peptide spans 1 to 20; the sequence is MARFVALVLLGLLSLSGLDA. An Ig-like C1-type domain is found at 25 to 112; sequence PKIQVYSRHP…HVTLEQPRIV (88 aa). An intrachain disulfide couples Cys45 to Cys99.

This sequence belongs to the beta-2-microglobulin family. In terms of assembly, heterodimer of an alpha chain and a beta chain. Beta-2-microglobulin is the beta-chain of major histocompatibility complex class I molecules. Forms a heterotrimer with MR1 and a metabolite antigen.

It is found in the secreted. Component of the class I major histocompatibility complex (MHC). Involved in the presentation of peptide antigens to the immune system. In Bos taurus (Bovine), this protein is Beta-2-microglobulin (B2M).